Here is a 234-residue protein sequence, read N- to C-terminus: Superoxide dismutase [Mn], mitochondrial (234 aa).

The transit peptide at 1-34 directs the protein to the mitochondrion; the sequence is MFSIRSSSRVLLKASSATTRATLNAAASKTFTRS. Positions 60, 108, 198, and 202 each coordinate Mn(2+).

It belongs to the iron/manganese superoxide dismutase family. As to quaternary structure, homotetramer. Requires Mn(2+) as cofactor.

The protein resides in the mitochondrion matrix. The enzyme catalyses 2 superoxide + 2 H(+) = H2O2 + O2. Functionally, destroys superoxide anion radicals which are normally produced within the cells and which are toxic to biological systems. The sequence is that of Superoxide dismutase [Mn], mitochondrial (SOD2) from Candida albicans (Yeast).